The chain runs to 432 residues: Lysosomal acid phosphatase (432 aa).

An N-terminal signal peptide occupies residues 1–32 (MADGSCLGSGPQLGLIALLVVLLFSAVPLAQS). Residues 33–384 (RELRFVTLVY…TTSFIMTEET (352 aa)) are Lumenal-facing. The active-site Nucleophile is H44. Residues N94, N135, N179, N193, and N269 are each glycosylated (N-linked (GlcNAc...) asparagine). 3 disulfide bridges follow: C161–C373, C214–C313, and C348–C352. The Proton donor role is filled by D290. N-linked (GlcNAc...) asparagine glycans are attached at residues N325 and N334. The helical transmembrane segment at 385 to 405 (IIGLTIGAIALFIIIVVLMLL) threads the bilayer. The Cytoplasmic segment spans residues 406-432 (SCNEPKDDGYQHVSDEGDDHETKGLAM).

Belongs to the histidine acid phosphatase family. In terms of processing, the membrane-bound form is converted to the soluble form by sequential proteolytic processing. First, the C-terminal cytoplasmic tail is removed. Cleavage by a lysosomal protease releases the soluble form in the lysosome lumen.

The protein localises to the lysosome membrane. The protein resides in the lysosome lumen. It catalyses the reaction a phosphate monoester + H2O = an alcohol + phosphate. This Xenopus laevis (African clawed frog) protein is Lysosomal acid phosphatase (acp2).